Reading from the N-terminus, the 429-residue chain is Formate-dependent phosphoribosylglycinamide formyltransferase (429 aa).

N(1)-(5-phospho-beta-D-ribosyl)glycinamide is bound by residues 26–27 and Glu-86; that span reads EL. ATP contacts are provided by residues Arg-118, Lys-159, 199–202, and Glu-207; that span reads EEHI. Residues 123-319 form the ATP-grasp domain; sequence ETLAREAKVP…EFGLHLRAVL (197 aa). The Mg(2+) site is built by Glu-276 and Glu-288. Residues Asp-295, Lys-375, and 382–383 contribute to the N(1)-(5-phospho-beta-D-ribosyl)glycinamide site; that span reads RR.

This sequence belongs to the PurK/PurT family. In terms of assembly, homodimer.

It carries out the reaction N(1)-(5-phospho-beta-D-ribosyl)glycinamide + formate + ATP = N(2)-formyl-N(1)-(5-phospho-beta-D-ribosyl)glycinamide + ADP + phosphate + H(+). It functions in the pathway purine metabolism; IMP biosynthesis via de novo pathway; N(2)-formyl-N(1)-(5-phospho-D-ribosyl)glycinamide from N(1)-(5-phospho-D-ribosyl)glycinamide (formate route): step 1/1. In terms of biological role, involved in the de novo purine biosynthesis. Catalyzes the transfer of formate to 5-phospho-ribosyl-glycinamide (GAR), producing 5-phospho-ribosyl-N-formylglycinamide (FGAR). Formate is provided by PurU via hydrolysis of 10-formyl-tetrahydrofolate. This Thermococcus kodakarensis (strain ATCC BAA-918 / JCM 12380 / KOD1) (Pyrococcus kodakaraensis (strain KOD1)) protein is Formate-dependent phosphoribosylglycinamide formyltransferase.